A 321-amino-acid chain; its full sequence is Mas-related G-protein coupled receptor member H (321 aa).

Topologically, residues 1-35 (MEPLATTLCPQECTQTTRNETPNETTWSSEHVTKY) are extracellular. N23 carries N-linked (GlcNAc...) asparagine glycosylation. A helical transmembrane segment spans residues 36-56 (TYISISLVICSLGLVGNGLLI). Residues 57 to 71 (WFLIFCIKRKPFTIY) lie on the Cytoplasmic side of the membrane. The helical transmembrane segment at 72–92 (ILHLAFADFMVLLCSSIIQLV) threads the bilayer. The Extracellular portion of the chain corresponds to 93–102 (NTFHIYDSTL). A helical membrane pass occupies residues 103-126 (VSYAVLFMIFGYNTGLHLLTAISV). Topologically, residues 127 to 147 (ERCLSVLYPIWYHCRRPKHQS) are cytoplasmic. A helical membrane pass occupies residues 148–168 (TVACTLLWALSVLVSGLENFF). The Extracellular segment spans residues 169 to 188 (CILEVKPQFPECRYVYIFSC). The helical transmembrane segment at 189 to 209 (TLTFLVFVPLMVFSNLILFIQ) threads the bilayer. The Cytoplasmic segment spans residues 210 to 225 (VCCNLKPRQPAKLYVI). A helical membrane pass occupies residues 226–246 (IMATVILFLVFAMPMKVLLII). A topological domain (extracellular) is located at residue G247. A helical transmembrane segment spans residues 248–271 (YYSNSTDASVWKSLPYLNMLSTIN). Residues 272-320 (CSINPIVYFVVGSLRRKRSRKSLKEALQKVFEEKPVVASRENEVQFSLP) lie on the Cytoplasmic side of the membrane.

This sequence belongs to the G-protein coupled receptor 1 family. Mas subfamily.

The protein localises to the cell membrane. Its function is as follows. Orphan receptor. May regulate nociceptor function and/or development, including the sensation or modulation of pain. The protein is Mas-related G-protein coupled receptor member H (Mrgprh) of Rattus norvegicus (Rat).